The sequence spans 318 residues: Isoeugenol synthase 1 (318 aa).

Residues 10 to 13, 32 to 43, arginine 33, 84 to 86, 109 to 111, lysine 131, and 151 to 153 contribute to the NADP(+) site; these read TGYI, ARPLTPDSTPSS, VPM, SEF, and NCF. The Proton donor/acceptor role is filled by lysine 131. Residue proline 260 coordinates substrate.

The protein belongs to the NmrA-type oxidoreductase family. As to expression, mostly expressed in petals, and, to a lower extent, in sepals, stamens and pistils.

The catalysed reaction is (E)-isoeugenol + acetate + NADP(+) = (E)-coniferyl acetate + NADPH. The protein operates within aromatic compound metabolism; phenylpropanoid biosynthesis. Its function is as follows. Catalyzes the synthesis of the phenylpropene isoeugenol from coniferyl acetate. Phenylpropenes are the primary constituents of various essential plant oils. They are produced as antimicrobial and antianimal compounds, or as floral attractants of pollinators. Isoeugenol is a characteristic aromatic constituent of spices and a floral volatile compound. The polypeptide is Isoeugenol synthase 1 (Clarkia breweri (Fairy fans)).